We begin with the raw amino-acid sequence, 440 residues long: Histidinol dehydrogenase (440 aa).

NAD(+) contacts are provided by Y133, Q194, and N217. 3 residues coordinate substrate: S240, Q262, and H265. Residues Q262 and H265 each coordinate Zn(2+). Catalysis depends on proton acceptor residues E330 and H331. Substrate is bound by residues H331, D364, E418, and H423. D364 contacts Zn(2+). Position 423 (H423) interacts with Zn(2+).

This sequence belongs to the histidinol dehydrogenase family. Zn(2+) is required as a cofactor.

The catalysed reaction is L-histidinol + 2 NAD(+) + H2O = L-histidine + 2 NADH + 3 H(+). It functions in the pathway amino-acid biosynthesis; L-histidine biosynthesis; L-histidine from 5-phospho-alpha-D-ribose 1-diphosphate: step 9/9. Its function is as follows. Catalyzes the sequential NAD-dependent oxidations of L-histidinol to L-histidinaldehyde and then to L-histidine. The chain is Histidinol dehydrogenase from Nitrosospira multiformis (strain ATCC 25196 / NCIMB 11849 / C 71).